Reading from the N-terminus, the 61-residue chain is Protein transport protein Sec61 subunit beta (61 aa).

The Cytoplasmic segment spans residues 1–35 (MKRPSTQRAPATVNKGGNSMMKFYSEDAIGLKVGP). Residues 36–56 (TAVLFMSLIFIAFVIILHIMG) traverse the membrane as a helical segment. Residues 57 to 61 (KYTRS) are Extracellular-facing.

Belongs to the SEC61-beta family. In terms of assembly, the SEC61 channel-forming translocon complex.

It localises to the endoplasmic reticulum membrane. Component of SEC61 channel-forming translocon complex that mediates transport of signal peptide-containing precursor polypeptides across the endoplasmic reticulum (ER). Forms a ribosome receptor and a gated pore in the ER membrane, both functions required for cotranslational translocation of nascent polypeptides. The chain is Protein transport protein Sec61 subunit beta (sec61b) from Dictyostelium discoideum (Social amoeba).